The sequence spans 318 residues: Dihydroorotate dehydrogenase B (NAD(+)), catalytic subunit (318 aa).

FMN-binding positions include Ser-19 and 43-44 (KT). Substrate is bound by residues Lys-43, 69 to 73 (NAMGL), and Asn-125. Position 125 (Asn-125) interacts with FMN. The active-site Nucleophile is the Cys-128. Residues Lys-164 and Val-192 each coordinate FMN. 193–194 (NT) contacts substrate. Residues Gly-219, 247 to 248 (GG), and 269 to 270 (AT) contribute to the FMN site.

The protein belongs to the dihydroorotate dehydrogenase family. Type 1 subfamily. As to quaternary structure, heterotetramer of 2 PyrK and 2 PyrD type B subunits. The cofactor is FMN.

It is found in the cytoplasm. It carries out the reaction (S)-dihydroorotate + NAD(+) = orotate + NADH + H(+). It participates in pyrimidine metabolism; UMP biosynthesis via de novo pathway; orotate from (S)-dihydroorotate (NAD(+) route): step 1/1. Its function is as follows. Catalyzes the conversion of dihydroorotate to orotate with NAD(+) as electron acceptor. This Methanopyrus kandleri (strain AV19 / DSM 6324 / JCM 9639 / NBRC 100938) protein is Dihydroorotate dehydrogenase B (NAD(+)), catalytic subunit (pyrD).